We begin with the raw amino-acid sequence, 180 residues long: Large ribosomal subunit protein uL5 (180 aa).

Belongs to the universal ribosomal protein uL5 family. As to quaternary structure, part of the 50S ribosomal subunit; part of the 5S rRNA/L5/L18/L25 subcomplex. Contacts the 5S rRNA and the P site tRNA. Forms a bridge to the 30S subunit in the 70S ribosome.

Its function is as follows. This is one of the proteins that bind and probably mediate the attachment of the 5S RNA into the large ribosomal subunit, where it forms part of the central protuberance. In the 70S ribosome it contacts protein S13 of the 30S subunit (bridge B1b), connecting the 2 subunits; this bridge is implicated in subunit movement. Contacts the P site tRNA; the 5S rRNA and some of its associated proteins might help stabilize positioning of ribosome-bound tRNAs. This is Large ribosomal subunit protein uL5 from Lactobacillus acidophilus (strain ATCC 700396 / NCK56 / N2 / NCFM).